Here is a 93-residue protein sequence, read N- to C-terminus: uncharacterized protein (93 aa).

Residues 1 to 22 form the signal peptide; sequence MNKYWLSGIIFLAYGLASPAFS.

This is an uncharacterized protein from Escherichia coli (strain K12).